We begin with the raw amino-acid sequence, 216 residues long: UPF0502 protein PFL_4004 (216 aa).

The protein belongs to the UPF0502 family.

The chain is UPF0502 protein PFL_4004 from Pseudomonas fluorescens (strain ATCC BAA-477 / NRRL B-23932 / Pf-5).